A 1439-amino-acid polypeptide reads, in one-letter code: Receptor-type tyrosine-protein phosphatase kappa (1439 aa).

The signal sequence occupies residues Met1–Ser26. Topologically, residues Ala27 to Lys752 are extracellular. One can recognise an MAM domain in the interval Phe31–Lys194. Residues Asn101, Asn140, and Asn211 are each glycosylated (N-linked (GlcNAc...) asparagine). Residues Pro196 to Ser281 enclose the Ig-like C2-type domain. The cysteines at positions 216 and 270 are disulfide-linked. 4 consecutive Fibronectin type-III domains span residues Pro294–Pro389, Thr392–Asp488, Gly491–Thr595, and Pro597–Pro680. 9 N-linked (GlcNAc...) asparagine glycosylation sites follow: Asn416, Asn424, Asn436, Asn462, Asn552, Asn586, Asn590, Asn607, and Asn690. Residues Ile753–Val774 traverse the membrane as a helical segment. Residues Lys775–Ser1439 are Cytoplasmic-facing. At Ser856 the chain carries Phosphoserine. 2 Tyrosine-protein phosphatase domains span residues Phe887 to Ala1141 and Leu1173 to Tyr1435. Substrate contacts are provided by residues Asp1050, Cys1082–Arg1088, and Gln1126. Cys1082 acts as the Phosphocysteine intermediate in catalysis. Cys1376 acts as the Phosphocysteine intermediate in catalysis.

This sequence belongs to the protein-tyrosine phosphatase family. Receptor class 2B subfamily. In terms of processing, this protein undergoes proteolytic processing. High levels in lung, brain and colon; less in liver, pancreas, stomach, kidney, placenta and mammary carcinoma.

It localises to the cell junction. Its subcellular location is the adherens junction. The protein localises to the cell membrane. The enzyme catalyses O-phospho-L-tyrosyl-[protein] + H2O = L-tyrosyl-[protein] + phosphate. Regulation of processes involving cell contact and adhesion such as growth control, tumor invasion, and metastasis. Negative regulator of EGFR signaling pathway. Forms complexes with beta-catenin and gamma-catenin/plakoglobin. Beta-catenin may be a substrate for the catalytic activity of PTPRK/PTP-kappa. This chain is Receptor-type tyrosine-protein phosphatase kappa (PTPRK), found in Homo sapiens (Human).